The sequence spans 278 residues: tRNA (guanine-N(7)-)-methyltransferase (278 aa).

Residues 1–42 (MRHDGPMHVQPGVGLQSDTSSSTGTGSGPADEPEAEKSAWGY) are disordered. Positions 106, 131, 160, and 183 each coordinate S-adenosyl-L-methionine. D183 is a catalytic residue. Substrate is bound by residues K187, D219, and 256-259 (TKYE).

It belongs to the class I-like SAM-binding methyltransferase superfamily. TrmB family.

The enzyme catalyses guanosine(46) in tRNA + S-adenosyl-L-methionine = N(7)-methylguanosine(46) in tRNA + S-adenosyl-L-homocysteine. It functions in the pathway tRNA modification; N(7)-methylguanine-tRNA biosynthesis. Its function is as follows. Catalyzes the formation of N(7)-methylguanine at position 46 (m7G46) in tRNA. The protein is tRNA (guanine-N(7)-)-methyltransferase of Mycobacterium ulcerans (strain Agy99).